The sequence spans 383 residues: Gap junction alpha-1 protein (383 aa).

Residues 2 to 23 (GDWSALGKLLDKVQAYSTAGGK) are Cytoplasmic-facing. Ser-5 bears the Phosphoserine mark. A helical transmembrane segment spans residues 24–44 (VWLSVLFIFRILLLGTAVESA). Residues 45–76 (WGDEQSAFRCNTQQPGCENVCYDKSFPISHVR) are Extracellular-facing. 2 disulfides stabilise this stretch: Cys-54–Cys-193 and Cys-188–Cys-199. The helical transmembrane segment at 77 to 97 (FWVLQIIFVSVPTLLYLAHVF) threads the bilayer. Residues 98 to 156 (YVMRKEEKLNKKEEELKVVAQTDGANVDMHLKQIEIKKFKYGIEEHGKVKMRGGLLRTY) lie on the Cytoplasmic side of the membrane. Lys-145 participates in a covalent cross-link: Glycyl lysine isopeptide (Lys-Gly) (interchain with G-Cter in SUMO). A helical membrane pass occupies residues 157-177 (IISILFKSVFEVAFLLIQWYI). The Extracellular portion of the chain corresponds to 178–208 (YGFSLSAVYTCKRDPCPHQVDCFLSRPTEKT). Residues 209–229 (IFIIFMLVVSLVSLALNIIEL) form a helical membrane-spanning segment. Residues 230–383 (FYVFFKGVKD…SRPRPDDLEI (154 aa)) lie on the Cytoplasmic side of the membrane. A Glycyl lysine isopeptide (Lys-Gly) (interchain with G-Cter in SUMO) cross-link involves residue Lys-238. Residues 245 to 383 (SDPYHTTTGP…SRPRPDDLEI (139 aa)) are interaction with NOV. Tyr-248 carries the post-translational modification Phosphotyrosine. Phosphoserine occurs at positions 256, 258, and 263. An interaction with UBQLN4 region spans residues 265–383 (KYAYFNGCSS…SRPRPDDLEI (119 aa)). An S-nitrosocysteine modification is found at Cys-272. At Thr-276 the chain carries Phosphothreonine. Phosphoserine is present on residues Ser-307 and Ser-315. The segment covering 318–333 (QNRMGQAGSTISNSHA) has biased composition (polar residues). The interval 318–383 (QNRMGQAGST…SRPRPDDLEI (66 aa)) is disordered. Phosphoserine; by CK1 is present on Ser-326. The residue at position 327 (Thr-327) is a Phosphothreonine. Phosphoserine; by CK1 is present on residues Ser-329 and Ser-331. Positions 339–352 (PDDHQNSKKLDAGH) are enriched in basic and acidic residues. Phosphoserine occurs at positions 345 and 366. Low complexity predominate over residues 363–375 (RPSSRASSRASSR). Phosphoserine; by PKC/PRKCG and PKC/PRKCD is present on Ser-369. Residues Ser-370 and Ser-374 each carry the phosphoserine modification.

Belongs to the connexin family. Alpha-type (group II) subfamily. A connexon is composed of a hexamer of connexins. Interacts with SGSM3. Interacts with RIC1/CIP150. Interacts with CNST and CSNK1D. Interacts (via C-terminus) with TJP1. Interacts (via C-terminus) with SRC (via SH3 domain). Interacts (not ubiquitinated) with UBQLN4 (via UBA domain). Interacts with NOV. Interacts with TMEM65. Interacts with ANK3/ANKG and PKP2. Post-translationally, phosphorylation at Ser-326, Ser-329 and Ser-331 by CK1 modulates gap junction assembly. Phosphorylated at Ser-369 by PRKCG; phosphorylation induces disassembly of gap junction plaques and inhibition of gap junction activity. Phosphorylation at Ser-369 by PRKCD triggers its internalization into small vesicles leading to proteasome-mediated degradation. Sumoylated with SUMO1, SUMO2 and SUMO3, which may regulate the level of functional Cx43 gap junctions at the plasma membrane. May be desumoylated by SENP1 or SENP2. In terms of processing, acetylated in the developing cortex; leading to delocalization from the cell membrane.

Its subcellular location is the cell membrane. The protein resides in the cell junction. The protein localises to the gap junction. It localises to the endoplasmic reticulum. In terms of biological role, gap junction protein that acts as a regulator of bladder capacity. A gap junction consists of a cluster of closely packed pairs of transmembrane channels, the connexons, through which materials of low MW diffuse from one cell to a neighboring cell. May play a critical role in the physiology of hearing by participating in the recycling of potassium to the cochlear endolymph. Negative regulator of bladder functional capacity: acts by enhancing intercellular electrical and chemical transmission, thus sensitizing bladder muscles to cholinergic neural stimuli and causing them to contract. May play a role in cell growth inhibition through the regulation of NOV expression and localization. Plays an essential role in gap junction communication in the ventricles. The protein is Gap junction alpha-1 protein (GJA1) of Bos taurus (Bovine).